The primary structure comprises 160 residues: Crossover junction endodeoxyribonuclease RuvC (160 aa).

Active-site residues include aspartate 9, glutamate 68, and aspartate 141. Mg(2+) is bound by residues aspartate 9, glutamate 68, and aspartate 141.

This sequence belongs to the RuvC family. In terms of assembly, homodimer which binds Holliday junction (HJ) DNA. The HJ becomes 2-fold symmetrical on binding to RuvC with unstacked arms; it has a different conformation from HJ DNA in complex with RuvA. In the full resolvosome a probable DNA-RuvA(4)-RuvB(12)-RuvC(2) complex forms which resolves the HJ. It depends on Mg(2+) as a cofactor.

The protein resides in the cytoplasm. The enzyme catalyses Endonucleolytic cleavage at a junction such as a reciprocal single-stranded crossover between two homologous DNA duplexes (Holliday junction).. Functionally, the RuvA-RuvB-RuvC complex processes Holliday junction (HJ) DNA during genetic recombination and DNA repair. Endonuclease that resolves HJ intermediates. Cleaves cruciform DNA by making single-stranded nicks across the HJ at symmetrical positions within the homologous arms, yielding a 5'-phosphate and a 3'-hydroxyl group; requires a central core of homology in the junction. The consensus cleavage sequence is 5'-(A/T)TT(C/G)-3'. Cleavage occurs on the 3'-side of the TT dinucleotide at the point of strand exchange. HJ branch migration catalyzed by RuvA-RuvB allows RuvC to scan DNA until it finds its consensus sequence, where it cleaves and resolves the cruciform DNA. In Campylobacter jejuni (strain RM1221), this protein is Crossover junction endodeoxyribonuclease RuvC.